The following is a 60-amino-acid chain: Cytotoxin 3 (60 aa).

Disulfide bonds link cysteine 3/cysteine 21, cysteine 14/cysteine 38, cysteine 42/cysteine 53, and cysteine 54/cysteine 59.

Belongs to the three-finger toxin family. Short-chain subfamily. Type IA cytotoxin sub-subfamily. As to quaternary structure, monomer in solution; Homodimer and oligomer in the presence of negatively charged lipids forming a pore with a size ranging between 20 and 30 Angstroms. As to expression, expressed by the venom gland.

It is found in the secreted. It localises to the target cell membrane. Functionally, shows cytolytic activity on many different cells by forming pore in lipid membranes. In vivo, increases heart rate or kills the animal by cardiac arrest. In addition, it binds to heparin with high affinity, interacts with Kv channel-interacting protein 1 (KCNIP1) in a calcium-independent manner, and binds to integrin alpha-V/beta-3 (ITGAV/ITGB3) with moderate affinity. In Naja naja (Indian cobra), this protein is Cytotoxin 3.